A 369-amino-acid polypeptide reads, in one-letter code: Methylthioribose-1-phosphate isomerase (369 aa).

Substrate contacts are provided by residues 54-56 (RGA), arginine 95, and glutamine 208. Catalysis depends on aspartate 249, which acts as the Proton donor. 259 to 260 (NK) contacts substrate.

It belongs to the eIF-2B alpha/beta/delta subunits family. MtnA subfamily.

It catalyses the reaction 5-(methylsulfanyl)-alpha-D-ribose 1-phosphate = 5-(methylsulfanyl)-D-ribulose 1-phosphate. It functions in the pathway amino-acid biosynthesis; L-methionine biosynthesis via salvage pathway; L-methionine from S-methyl-5-thio-alpha-D-ribose 1-phosphate: step 1/6. In terms of biological role, catalyzes the interconversion of methylthioribose-1-phosphate (MTR-1-P) into methylthioribulose-1-phosphate (MTRu-1-P). The sequence is that of Methylthioribose-1-phosphate isomerase from Desulfatibacillum aliphaticivorans.